A 436-amino-acid chain; its full sequence is UDP-N-acetylmuramate--L-alanine ligase (436 aa).

108–114 is a binding site for ATP; that stretch reads GAHGKTS.

This sequence belongs to the MurCDEF family.

It is found in the cytoplasm. The enzyme catalyses UDP-N-acetyl-alpha-D-muramate + L-alanine + ATP = UDP-N-acetyl-alpha-D-muramoyl-L-alanine + ADP + phosphate + H(+). Its pathway is cell wall biogenesis; peptidoglycan biosynthesis. Its function is as follows. Cell wall formation. This Bacillus cereus (strain AH187) protein is UDP-N-acetylmuramate--L-alanine ligase.